We begin with the raw amino-acid sequence, 187 residues long: Threonylcarbamoyl-AMP synthase (187 aa).

In terms of domain architecture, YrdC-like spans 3–187; sequence EVLPADVAEL…AKSGQVIRKG (185 aa).

Belongs to the SUA5 family. TsaC subfamily.

It is found in the cytoplasm. The enzyme catalyses L-threonine + hydrogencarbonate + ATP = L-threonylcarbamoyladenylate + diphosphate + H2O. Required for the formation of a threonylcarbamoyl group on adenosine at position 37 (t(6)A37) in tRNAs that read codons beginning with adenine. Catalyzes the conversion of L-threonine, HCO(3)(-)/CO(2) and ATP to give threonylcarbamoyl-AMP (TC-AMP) as the acyladenylate intermediate, with the release of diphosphate. The chain is Threonylcarbamoyl-AMP synthase from Shewanella halifaxensis (strain HAW-EB4).